A 554-amino-acid polypeptide reads, in one-letter code: 7-epi-sesquithujene synthase (554 aa).

Residues Asp-308 and Asp-312 each coordinate Mg(2+). Residues Asp-308, Asp-312, Arg-449, and Asn-452 each coordinate substrate. The DDXXD motif signature appears at 308-312 (DDMFD). 3 residues coordinate Mg(2+): Asn-452, Ser-456, and Glu-460.

The protein belongs to the terpene synthase family. As to quaternary structure, monomer. Mg(2+) serves as cofactor. Mn(2+) is required as a cofactor. Highly expressed in the husk. Detected in leaf sheaths and leaves.

The protein resides in the cytoplasm. The catalysed reaction is (2E,6E)-farnesyl diphosphate = 7-epi-sesquithujene + diphosphate. It carries out the reaction (2E,6E)-farnesyl diphosphate = (1S,5S,6R)-alpha-bergamotene + diphosphate. It catalyses the reaction (2E,6E)-farnesyl diphosphate = (E)-beta-farnesene + diphosphate. The enzyme catalyses (2E,6E)-farnesyl diphosphate = (S)-beta-bisabolene + diphosphate. The catalysed reaction is (2Z,6E)-farnesyl diphosphate = (-)-beta-curcumene + diphosphate. It carries out the reaction (2E,6E)-farnesyl diphosphate = gamma-curcumene + diphosphate. It catalyses the reaction (2E,6E)-farnesyl diphosphate = sesquisabinene A + diphosphate. It participates in secondary metabolite biosynthesis; terpenoid biosynthesis. In terms of biological role, sesquiterpene synthase involved in the production after herbivore attack of a blend of volatiles that attracts natural enemies of herbivores. Converts farnesyl diphosphate to (S)-beta-bisabolene and 7-epi-sesquithujene, along with a mixture of more than 20 other minor sesquiterpene olefins. Can also act in vitro as a monoterpene synthase, converting geranyl diphosphate to (S)-(-)-limonene, beta-myrcene and 11 other monoterpenes. This is 7-epi-sesquithujene synthase from Zea mays (Maize).